The sequence spans 593 residues: UvrABC system protein C (593 aa).

The GIY-YIG domain maps to 14-91 (DKPGCYLMKN…IKEHDPRYNV (78 aa)). Positions 196-231 (EEMKQTLTEKMLQAAENMEFERAKEYRDQIKSIEAV) constitute a UVR domain.

This sequence belongs to the UvrC family. Interacts with UvrB in an incision complex.

It is found in the cytoplasm. The UvrABC repair system catalyzes the recognition and processing of DNA lesions. UvrC both incises the 5' and 3' sides of the lesion. The N-terminal half is responsible for the 3' incision and the C-terminal half is responsible for the 5' incision. In Brevibacillus brevis (strain 47 / JCM 6285 / NBRC 100599), this protein is UvrABC system protein C.